The primary structure comprises 290 residues: Formamidopyrimidine-DNA glycosylase (290 aa).

Catalysis depends on Pro2, which acts as the Schiff-base intermediate with DNA. Glu3 acts as the Proton donor in catalysis. Lys58 acts as the Proton donor; for beta-elimination activity in catalysis. DNA is bound by residues His97, Arg122, and Lys165. Residues Lys250 to Arg290 form an FPG-type; atypical zinc finger. Residue Arg280 is the Proton donor; for delta-elimination activity of the active site.

It belongs to the FPG family. As to quaternary structure, monomer. Zn(2+) serves as cofactor.

It carries out the reaction Hydrolysis of DNA containing ring-opened 7-methylguanine residues, releasing 2,6-diamino-4-hydroxy-5-(N-methyl)formamidopyrimidine.. It catalyses the reaction 2'-deoxyribonucleotide-(2'-deoxyribose 5'-phosphate)-2'-deoxyribonucleotide-DNA = a 3'-end 2'-deoxyribonucleotide-(2,3-dehydro-2,3-deoxyribose 5'-phosphate)-DNA + a 5'-end 5'-phospho-2'-deoxyribonucleoside-DNA + H(+). In terms of biological role, involved in base excision repair of DNA damaged by oxidation or by mutagenic agents. Acts as a DNA glycosylase that recognizes and removes damaged bases. Has a preference for oxidized purines, such as 7,8-dihydro-8-oxoguanine (8-oxoG). Has AP (apurinic/apyrimidinic) lyase activity and introduces nicks in the DNA strand. Cleaves the DNA backbone by beta-delta elimination to generate a single-strand break at the site of the removed base with both 3'- and 5'-phosphates. The polypeptide is Formamidopyrimidine-DNA glycosylase (Rhodospirillum centenum (strain ATCC 51521 / SW)).